Reading from the N-terminus, the 542-residue chain is GMP synthase [glutamine-hydrolyzing] (542 aa).

One can recognise a Glutamine amidotransferase type-1 domain in the interval 28–218; sequence MLVILDFGSQ…VYHICQCEPT (191 aa). The Nucleophile role is filled by cysteine 105. Active-site residues include histidine 192 and glutamate 194. The GMPS ATP-PPase domain occupies 219–417; it reads WTTEAFVEES…IGLPEEIVRR (199 aa). Residue 246–252 coordinates ATP; it reads SGGVDSS.

As to quaternary structure, homodimer.

It catalyses the reaction XMP + L-glutamine + ATP + H2O = GMP + L-glutamate + AMP + diphosphate + 2 H(+). The protein operates within purine metabolism; GMP biosynthesis; GMP from XMP (L-Gln route): step 1/1. In terms of biological role, catalyzes the synthesis of GMP from XMP. This is GMP synthase [glutamine-hydrolyzing] from Rippkaea orientalis (strain PCC 8801 / RF-1) (Cyanothece sp. (strain PCC 8801)).